The primary structure comprises 110 residues: Methionine-R-sulfoxide reductase B1-A (110 aa).

A MsrB domain is found at 1–104 (MSFCSFSGGE…FSSSLKFIPK (104 aa)). Positions 23, 26, 69, and 72 each coordinate Zn(2+). The active-site Nucleophile is Sec93. Sec93 is a non-standard amino acid (selenocysteine).

The protein belongs to the MsrB Met sulfoxide reductase family. It depends on Zn(2+) as a cofactor. In the embryo, expressed in the polster, paraxial mesoderm, tectum, otic vesicle and liver.

The protein localises to the cytoplasm. The protein resides in the nucleus. Its subcellular location is the cytoskeleton. It carries out the reaction L-methionyl-[protein] + [thioredoxin]-disulfide + H2O = L-methionyl-(R)-S-oxide-[protein] + [thioredoxin]-dithiol. The catalysed reaction is [thioredoxin]-disulfide + L-methionine + H2O = L-methionine (R)-S-oxide + [thioredoxin]-dithiol. Functionally, methionine-sulfoxide reductase that specifically reduces methionine (R)-sulfoxide back to methionine. While in many cases, methionine oxidation is the result of random oxidation following oxidative stress, methionine oxidation is also a post-translational modification that takes place on specific residue. Acts as a regulator of actin assembly by reducing methionine (R)-sulfoxide mediated by MICALs (mical1, mical2 or mical3) on actin, thereby promoting filament repolymerization. Plays a role in innate immunity by reducing oxidized actin, leading to actin repolymerization in macrophages. The chain is Methionine-R-sulfoxide reductase B1-A (msrb1) from Danio rerio (Zebrafish).